A 1050-amino-acid polypeptide reads, in one-letter code: Diacylglycerol kinase iota (1050 aa).

2 disordered regions span residues 52–73 (NPSS…SGSG) and 325–356 (PQNS…ENKG). Residues 332–347 (SNRKKKRTSFKRKASK) are compositionally biased toward basic residues. The 136-residue stretch at 367–502 (PLMKPLLVFV…DRWNLHVERN (136 aa)) folds into the DAGKc domain. ANK repeat units follow at residues 943-972 (GHCS…AELL) and 979-1008 (TGET…SLRQ). A PDZ-binding motif is present at residues 1048–1050 (TAV).

This sequence belongs to the eukaryotic diacylglycerol kinase family. As to quaternary structure, interacts (via PDZ-binding motif) with DLG4; controls the localization of DGKI to the synapse. Interacts (via PDZ-binding motif) with DLG1. Interacts (via PDZ-binding motif) with DLG2. Interacts (via PDZ-binding motif) with DLG3. May interact with RASGRP3; involved in the regulation of RASGRP3 activity. In terms of tissue distribution, specifically expressed in brain (at protein level). Expressed in hippocampus, cerebellum, brain stem and spinal cord (at protein level). Highly expressed in hippocampus, cerebellar cortex, olfactory bulb, and olfactory tubercle and to lower extent in the cerebral cortex, caudate putamen, and thalamus. Not detected in the white matter. Also expressed in eye. As to expression, major isoform in brain (at protein level). Minor isoform in brain (at protein level). In terms of tissue distribution, expressed in brain (at protein level).

The protein localises to the cell projection. The protein resides in the axon. It localises to the dendrite. It is found in the presynapse. Its subcellular location is the postsynapse. The protein localises to the postsynaptic density. The protein resides in the synaptic cell membrane. It localises to the cytoplasmic vesicle. It is found in the secretory vesicle. Its subcellular location is the synaptic vesicle membrane. The protein localises to the cytoplasm. The protein resides in the cytosol. It localises to the nucleus. It carries out the reaction a 1,2-diacyl-sn-glycerol + ATP = a 1,2-diacyl-sn-glycero-3-phosphate + ADP + H(+). The catalysed reaction is 1,2-di-(9Z-octadecenoyl)-sn-glycerol + ATP = 1,2-di-(9Z-octadecenoyl)-sn-glycero-3-phosphate + ADP + H(+). The enzyme catalyses 1-octadecanoyl-2-(9Z,12Z)-octadecadienoyl-sn-glycerol + ATP = 1-octadecanoyl-2-(9Z,12Z-octadecadienoyl)-sn-glycero-3-phosphate + ADP + H(+). It catalyses the reaction 1-octadecanoyl-2-(5Z,8Z,11Z,14Z-eicosatetraenoyl)-sn-glycerol + ATP = 1-octadecanoyl-2-(5Z,8Z,11Z,14Z-eicosatetraenoyl)-sn-glycero-3-phosphate + ADP + H(+). The protein operates within lipid metabolism; glycerolipid metabolism. Activated by phosphatidylserine. Its function is as follows. Diacylglycerol kinase that converts diacylglycerol/DAG into phosphatidic acid/phosphatidate/PA and regulates the respective levels of these two bioactive lipids. Thereby, acts as a central switch between the signaling pathways activated by these second messengers with different cellular targets and opposite effects in numerous biological processes. Has probably no preference for any of the diacylglycerols in terms of the acyl chain composition, especially for the acyl chain at the sn-2 position. By controlling the diacylglycerol/DAG-mediated activation of RASGRP3, negatively regulates the Rap1 signaling pathway. May play a role in presynaptic diacylglycerol/DAG signaling and control neurotransmitter release during metabotropic glutamate receptor-dependent long-term depression. In terms of biological role, has a decreased affinity for ATP and a reduced diacylglycerol kinase activity. Has no preference for any of the diacylglycerols in terms of the acyl chain composition. Functionally, has no diacylglycerol kinase activity. The chain is Diacylglycerol kinase iota from Rattus norvegicus (Rat).